The sequence spans 377 residues: Guanine nucleotide-binding protein subunit beta (377 aa).

WD repeat units lie at residues 63–93, 105–135, 154–185, 202–233, 246–276, 293–323, and 339–369; these read GHTG…IVWN, LPCA…SIFN, GHKG…VLWD, GHTA…RLWD, CHEG…RLFD, GDIP…YVWD, and SHEG…KIWA.

Belongs to the WD repeat G protein beta family. As to quaternary structure, g proteins are composed of 3 units, alpha, beta and gamma.

The protein resides in the cell membrane. It is found in the endoplasmic reticulum membrane. Its function is as follows. Guanine nucleotide-binding proteins (G proteins) are involved as a modulator or transducer in various transmembrane signaling systems. The beta and gamma chains are required for the GTPase activity, for replacement of GDP by GTP, and for G protein-effector interaction. The protein is Guanine nucleotide-binding protein subunit beta of Nicotiana plumbaginifolia (Leadwort-leaved tobacco).